The sequence spans 372 residues: Histidinol-phosphate aminotransferase (372 aa).

Lysine 230 is modified (N6-(pyridoxal phosphate)lysine).

Belongs to the class-II pyridoxal-phosphate-dependent aminotransferase family. Histidinol-phosphate aminotransferase subfamily. In terms of assembly, homodimer. Requires pyridoxal 5'-phosphate as cofactor.

It carries out the reaction L-histidinol phosphate + 2-oxoglutarate = 3-(imidazol-4-yl)-2-oxopropyl phosphate + L-glutamate. Its pathway is amino-acid biosynthesis; L-histidine biosynthesis; L-histidine from 5-phospho-alpha-D-ribose 1-diphosphate: step 7/9. The chain is Histidinol-phosphate aminotransferase from Paenarthrobacter aurescens (strain TC1).